Reading from the N-terminus, the 331-residue chain is MRRIYAAWTLVAAAGVMDCSPRLEKAAAFTLGPDSQVIVFPFMFQGYNIAVLPTTKYGDLKGNARRRVASFLEHNISHAVWYFVVGGIAYKDDRSERLFSEMMDGYLKKISAGASKVYKGGRKMFSESLETVHEMIFECNKAGDGHVVKYGKSIINRLSDMIENALGEVSAEEKRKYRRFWSRVKERAGFLYSTERLRRVVEAEKIVCNACKEICLELEEEELMGLLAEGSVRKALKAKVDEDEISRGLYLECTVVNTSLLLDAHREHGGDVTRELVKQMLLGKKGEEIDRRYINKVANVVKERQRSEMEKRDREQDPERRRLRARRVGSL.

Basic and acidic residues predominate over residues 305-320; that stretch reads QRSEMEKRDREQDPER. The segment at 305-331 is disordered; it reads QRSEMEKRDREQDPERRRLRARRVGSL. Residues 321–331 are compositionally biased toward basic residues; the sequence is RRLRARRVGSL.

The protein belongs to the UPF0329 family.

This is UPF0329 protein ECU01_0080/ECU01_1530/ECU02_1560/ECU04_0090/ECU08_0010/ECU08_2090 from Encephalitozoon cuniculi (strain GB-M1) (Microsporidian parasite).